The chain runs to 435 residues: Solute carrier family 38 member 8 (435 aa).

11 consecutive transmembrane segments (helical) span residues 29-49 (AVFI…PWAF), 55-75 (VVPA…GLVI), 100-120 (IGKL…VAFL), 151-171 (FTLP…REIA), 178-198 (ILGT…YYLW), 218-240 (VFSV…SIYC), 250-270 (WALV…LTGV), 295-315 (IIVA…IVLF), 348-368 (MPLT…MPDL), 374-394 (IIGG…LICA), and 410-430 (VWGV…TAAA).

It belongs to the amino acid/polyamine transporter 2 family. As to expression, expressed in fetal and adult brain, and spinal cord. In the brain, it is localized in the cell body and axon of the majority of neuronal cells and in a subset of glial cells. Found throughout the neuronal retina, with higher expression levels in the inner and outer plexiform layers and the photoreceptor layer. Very weak expression is also present in the kidneys, thymus, and testes.

Its subcellular location is the membrane. The protein localises to the cytoplasm. It is found in the cell cortex. It localises to the cell projection. The protein resides in the axon. The enzyme catalyses L-glutamine(out) = L-glutamine(in). It carries out the reaction L-alanine(in) = L-alanine(out). It catalyses the reaction L-histidine(out) = L-histidine(in). The catalysed reaction is L-aspartate(out) = L-aspartate(in). The enzyme catalyses L-arginine(in) = L-arginine(out). It carries out the reaction L-leucine(in) = L-leucine(out). In terms of biological role, electrogenic sodium-dependent amino acid transporter with a preference for L-glutamine, L-alanine, L-histidine, L-aspartate and L-arginine. May facilitate glutamine uptake in both excitatory and inhibitory neurons. The transport mechanism and stoichiometry remain to be elucidated. This is Solute carrier family 38 member 8 from Homo sapiens (Human).